Reading from the N-terminus, the 139-residue chain is Putative pre-16S rRNA nuclease (139 aa).

This sequence belongs to the YqgF nuclease family.

The protein resides in the cytoplasm. Functionally, could be a nuclease involved in processing of the 5'-end of pre-16S rRNA. In Streptococcus gordonii (strain Challis / ATCC 35105 / BCRC 15272 / CH1 / DL1 / V288), this protein is Putative pre-16S rRNA nuclease.